We begin with the raw amino-acid sequence, 320 residues long: Ferrochelatase (320 aa).

Positions 194 and 275 each coordinate Fe cation.

Belongs to the ferrochelatase family.

It localises to the cytoplasm. The enzyme catalyses heme b + 2 H(+) = protoporphyrin IX + Fe(2+). It participates in porphyrin-containing compound metabolism; protoheme biosynthesis; protoheme from protoporphyrin-IX: step 1/1. In terms of biological role, catalyzes the ferrous insertion into protoporphyrin IX. The protein is Ferrochelatase of Enterobacter sp. (strain 638).